Reading from the N-terminus, the 642-residue chain is Threonine--tRNA ligase (642 aa).

Residues 1–61 (MPIITLPDGS…SEDANLEIIT (61 aa)) enclose the TGS domain. The interval 243–534 (DHRKIGKALN…ITEEYAGFFP (292 aa)) is catalytic. Zn(2+) is bound by residues cysteine 334, histidine 385, and histidine 511.

Belongs to the class-II aminoacyl-tRNA synthetase family. As to quaternary structure, homodimer. Zn(2+) serves as cofactor.

The protein resides in the cytoplasm. It carries out the reaction tRNA(Thr) + L-threonine + ATP = L-threonyl-tRNA(Thr) + AMP + diphosphate + H(+). Functionally, catalyzes the attachment of threonine to tRNA(Thr) in a two-step reaction: L-threonine is first activated by ATP to form Thr-AMP and then transferred to the acceptor end of tRNA(Thr). Also edits incorrectly charged L-seryl-tRNA(Thr). In Histophilus somni (strain 2336) (Haemophilus somnus), this protein is Threonine--tRNA ligase.